The sequence spans 727 residues: Adhesion G protein-coupled receptor L4 (727 aa).

The first 19 residues, 1-19 (MKLLLFAAWFSSLLDPCRF), serve as a signal peptide directing secretion. The Extracellular portion of the chain corresponds to 20–467 (LDICQSCHPN…LAHYNVLTRI (448 aa)). The 39-residue stretch at 52–90 (DDNECETVPEICGLHANCTNYVGGYYCNCLSGFISNGTE) folds into the EGF-like 1; calcium-binding domain. 6 disulfide bridges follow: cysteine 56/cysteine 69, cysteine 63/cysteine 78, cysteine 106/cysteine 118, cysteine 112/cysteine 127, cysteine 408/cysteine 438, and cysteine 426/cysteine 440. Positions 102–139 (DINECEEDRKCGPNSKCHNNIGSFICSCLRGYTSPAGP) constitute an EGF-like 2; calcium-binding domain. The 175-residue stretch at 282 to 456 (TQMQVHAGDV…AILMSSARAN (175 aa)) folds into the GAIN-B domain. The GPS stretch occupies residues 408-456 (CAFWEYSPSMMGHWSLDGCIRTRVNTTHTSCSCNHLTHFAILMSSARAN). The chain crosses the membrane as a helical span at residues 468-488 (TQLGMVISLICLSMCIFTFWF). Over 489 to 496 (FRDIQNTR) the chain is Cytoplasmic. The helical transmembrane segment at 497–517 (TTIHKNLCCSLFMAQFIFLIG) threads the bilayer. The Extracellular portion of the chain corresponds to 518 to 535 (INKSAHKWFCSLIAGLLH). The chain crosses the membrane as a helical span at residues 536-556 (YFFLAAFAWMCIEGIHLYLIV). The Cytoplasmic segment spans residues 557-568 (VGVIYNKGFLHR). A helical membrane pass occupies residues 569 to 589 (NFYAFGYGSPAVVVAISATLG). Topologically, residues 590–609 (YKYYGTSSVCWLSTENNFIW) are extracellular. The chain crosses the membrane as a helical span at residues 610–630 (SFIGPAILIILVNLLAFAVII). The Cytoplasmic portion of the chain corresponds to 631–654 (YKVYRHTAVKKPEISHYENIRSCA). A helical transmembrane segment spans residues 655–675 (RGAIALLFVLGVTWAFGVMYI). At 676–682 (LYETTLT) the chain is on the extracellular side. A helical transmembrane segment spans residues 683–703 (AYLFTFANVFQGMFIFIFLCV).

It belongs to the G-protein coupled receptor 2 family. Adhesion G-protein coupled receptor (ADGR) subfamily. Heterodimer of 2 chains generated by proteolytic processing; the large extracellular N-terminal fragment and the membrane-bound C-terminal fragment predominantly remain associated and non-covalently linked. In terms of processing, autoproteolytically processed at the GPS region of the GAIN-B domain; this cleavage modulates receptor activity.

The protein resides in the cell membrane. Functionally, orphan receptor that plays a role in vessel formation. This Danio rerio (Zebrafish) protein is Adhesion G protein-coupled receptor L4.